A 351-amino-acid polypeptide reads, in one-letter code: Protein Tex24 (351 aa).

Disordered regions lie at residues 69–101, 117–144, and 275–298; these read PSTA…PSLS, PEDR…AQGK, and EKVK…PKSM. Residues 73–83 are compositionally biased toward basic residues; it reads HGKRKPGHLPR. The segment covering 275–285 has biased composition (basic and acidic residues); sequence EKVKPSSHDMH.

As to expression, specific to testis, where it is expressed in spermatogonia.

It localises to the nucleus. Its function is as follows. Nuclear factor which might have a role in spermatogenesis. The protein is Protein Tex24 of Mus musculus (Mouse).